The primary structure comprises 1260 residues: ATP-dependent helicase/deoxyribonuclease subunit B (1260 aa).

Belongs to the helicase family. AddB/RexB type 2 subfamily. Heterodimer of AddA and RexB. The cofactor is Mg(2+).

Functionally, the heterodimer acts as both an ATP-dependent DNA helicase and an ATP-dependent, dual-direction single-stranded exonuclease. Recognizes the chi site generating a DNA molecule suitable for the initiation of homologous recombination. This subunit has 5' -&gt; 3' nuclease activity but not helicase activity. This Limosilactobacillus reuteri (strain DSM 20016) (Lactobacillus reuteri) protein is ATP-dependent helicase/deoxyribonuclease subunit B.